Here is a 726-residue protein sequence, read N- to C-terminus: F-box protein COS111 (726 aa).

The 52-residue stretch at 143–194 folds into the F-box domain; sequence FADINCLPEEIICRIIANLNDADSQRNCLLVSQEWSECAKRIIYKDVKFTST. The tract at residues 276–295 is disordered; it reads RSRTRRSSDASSMNSSVFSH. Positions 284–295 are enriched in low complexity; the sequence is DASSMNSSVFSH.

Its function is as follows. F-box protein probably involved in ubiquitin conjugation pathway. The chain is F-box protein COS111 (COS111) from Kluyveromyces lactis (strain ATCC 8585 / CBS 2359 / DSM 70799 / NBRC 1267 / NRRL Y-1140 / WM37) (Yeast).